The following is a 287-amino-acid chain: 4-hydroxybenzoate octaprenyltransferase (287 aa).

The next 6 helical transmembrane spans lie at 41–61 (WPLIVIFALGTLLMRSAGCAM), 89–109 (WEAVAIAVGLSFVAFLLILPL), 133–153 (FFAIPQAYLGIAFGFGIPMAF), 158–178 (NTVPPLAWVMLIANVFWSIAY), 218–238 (LGIYVWIGIALGFGAAYWVGW), and 267–287 (NNWLGGVLFAGIAAHYLMAGS).

It belongs to the UbiA prenyltransferase family. Mg(2+) is required as a cofactor.

It localises to the cell inner membrane. It carries out the reaction all-trans-octaprenyl diphosphate + 4-hydroxybenzoate = 4-hydroxy-3-(all-trans-octaprenyl)benzoate + diphosphate. It participates in cofactor biosynthesis; ubiquinone biosynthesis. Catalyzes the prenylation of para-hydroxybenzoate (PHB) with an all-trans polyprenyl group. Mediates the second step in the final reaction sequence of ubiquinone-8 (UQ-8) biosynthesis, which is the condensation of the polyisoprenoid side chain with PHB, generating the first membrane-bound Q intermediate 3-octaprenyl-4-hydroxybenzoate. This chain is 4-hydroxybenzoate octaprenyltransferase, found in Burkholderia multivorans (strain ATCC 17616 / 249).